We begin with the raw amino-acid sequence, 347 residues long: Probable E3 ubiquitin-protein ligase DTX3 (347 aa).

The tract at residues 111–157 (GGEHPELHRPGPPPLRAAPLLPPGARGLPPPPPPLPPPLPPRLREDA) is disordered. Positions 120–151 (PGPPPLRAAPLLPPGARGLPPPPPPLPPPLPP) are enriched in pro residues. An RING-type zinc finger spans residues 164–205 (CPICLGEIQNAKTLEKCRHSFCEGCITRALQVKKACPMCGRF).

It belongs to the Deltex family. In terms of assembly, homodimer. May form a heterodimer with other members of the Deltex family. Interacts with NOTCH1. In terms of tissue distribution, strongly expressed in testis and brain. Weakly expressed in kidney.

The protein resides in the cytoplasm. It carries out the reaction S-ubiquitinyl-[E2 ubiquitin-conjugating enzyme]-L-cysteine + [acceptor protein]-L-lysine = [E2 ubiquitin-conjugating enzyme]-L-cysteine + N(6)-ubiquitinyl-[acceptor protein]-L-lysine.. Its pathway is protein modification; protein ubiquitination. Regulator of Notch signaling, a signaling pathway involved in cell-cell communications that regulates a broad spectrum of cell-fate determinations. Probably acts both as a positive and negative regulator of Notch, depending on the developmental and cell context. Functions as a ubiquitin ligase protein in vitro, suggesting that it may regulate the Notch pathway via some ubiquitin ligase activity. This chain is Probable E3 ubiquitin-protein ligase DTX3 (Dtx3), found in Mus musculus (Mouse).